A 483-amino-acid polypeptide reads, in one-letter code: Matrix metalloproteinase-20 (483 aa).

The signal sequence occupies residues 1 to 22; that stretch reads MKVLPASGLAVLLVTALKFSAA. Positions 23 to 107 are cleaved as a propeptide — activation peptide; sequence APSLFAATPR…PRCGVPDVAN (85 aa). Residues 98–105 carry the Cysteine switch motif; it reads PRCGVPDV. Cysteine 100 lines the Zn(2+) pocket. Residues glutamate 164, alanine 165, and aspartate 166 each contribute to the Ca(2+) site. Positions 176 and 178 each coordinate Zn(2+). 4 residues coordinate Ca(2+): aspartate 183, glycine 184, arginine 186, and threonine 188. Histidine 191 contacts Zn(2+). Residues glutamate 197, glycine 198, glycine 200, and aspartate 202 each coordinate Ca(2+). Histidine 204 serves as a coordination point for Zn(2+). Residues aspartate 206 and glutamate 209 each coordinate Ca(2+). A Zn(2+)-binding site is contributed by histidine 226. Glutamate 227 is a catalytic residue. Histidine 230 and histidine 236 together coordinate Zn(2+). 4 Hemopexin repeats span residues 293–343, 344–389, 391–439, and 440–483; these read PDIC…FPQL, MSNV…GFPR, VQRI…FSGV, and NGQI…WIGC. A disulfide bridge connects residues cysteine 296 and cysteine 483.

The protein belongs to the peptidase M10A family. Requires Zn(2+) as cofactor. The cofactor is Ca(2+). In terms of processing, autoactivates at least at the 107-Asn-|-Tyr-108 site. In terms of tissue distribution, expressed specifically in the enamel organ.

Its subcellular location is the secreted. The protein resides in the extracellular space. It localises to the extracellular matrix. Degrades amelogenin, the major protein component of the enamel matrix and two of the macromolecules characterizing the cartilage extracellular matrix: aggrecan and the cartilage oligomeric matrix protein (COMP). May play a central role in tooth enamel formation. The polypeptide is Matrix metalloproteinase-20 (MMP20) (Sus scrofa (Pig)).